A 91-amino-acid chain; its full sequence is Small ribosomal subunit protein uS19 (91 aa).

It belongs to the universal ribosomal protein uS19 family.

Functionally, protein S19 forms a complex with S13 that binds strongly to the 16S ribosomal RNA. This chain is Small ribosomal subunit protein uS19, found in Lactobacillus delbrueckii subsp. bulgaricus (strain ATCC 11842 / DSM 20081 / BCRC 10696 / JCM 1002 / NBRC 13953 / NCIMB 11778 / NCTC 12712 / WDCM 00102 / Lb 14).